We begin with the raw amino-acid sequence, 95 residues long: Putative pterin-4-alpha-carbinolamine dehydratase (95 aa).

Belongs to the pterin-4-alpha-carbinolamine dehydratase family.

It carries out the reaction (4aS,6R)-4a-hydroxy-L-erythro-5,6,7,8-tetrahydrobiopterin = (6R)-L-erythro-6,7-dihydrobiopterin + H2O. The chain is Putative pterin-4-alpha-carbinolamine dehydratase from Solibacter usitatus (strain Ellin6076).